The chain runs to 881 residues: Probable alpha/beta-glucosidase agdC (881 aa).

An N-terminal signal peptide occupies residues 1–14 (MLRSLLLLAPLVGA). Residues Asn-171, Asn-293, and Asn-373 are each glycosylated (N-linked (GlcNAc...) asparagine). Asp-422 (nucleophile) is an active-site residue. Glu-425 is a catalytic residue. Residues 440-485 (YSRDNDLPPAAPPVRPSNPRPLPGFPGDFQPSSSSKRSTKGSKVGL) are disordered. Over residues 448–463 (PAAPPVRPSNPRPLPG) the composition is skewed to pro residues. N-linked (GlcNAc...) asparagine glycosylation is present at Asn-506. The active-site Proton donor is Asp-571. N-linked (GlcNAc...) asparagine glycans are attached at residues Asn-572, Asn-608, and Asn-742.

The protein belongs to the glycosyl hydrolase 31 family.

It is found in the secreted. It catalyses the reaction Hydrolysis of terminal, non-reducing (1-&gt;4)-linked alpha-D-glucose residues with release of alpha-D-glucose.. It carries out the reaction Hydrolysis of terminal, non-reducing beta-D-glucosyl residues with release of beta-D-glucose.. In terms of biological role, glucosidase involved in the degradation of cellulosic biomass. Has both alpha- and beta-glucosidase activity. This Neosartorya fischeri (strain ATCC 1020 / DSM 3700 / CBS 544.65 / FGSC A1164 / JCM 1740 / NRRL 181 / WB 181) (Aspergillus fischerianus) protein is Probable alpha/beta-glucosidase agdC (agdC).